The chain runs to 126 residues: Small ribosomal subunit protein uS13 (126 aa).

The interval 92–126 (HRRGLPANGQRTHTNARTRKGPRKGMLQRRPAATK) is disordered. Over residues 105 to 118 (TNARTRKGPRKGML) the composition is skewed to basic residues.

Belongs to the universal ribosomal protein uS13 family. Part of the 30S ribosomal subunit. Forms a loose heterodimer with protein S19. Forms two bridges to the 50S subunit in the 70S ribosome.

In terms of biological role, located at the top of the head of the 30S subunit, it contacts several helices of the 16S rRNA. In the 70S ribosome it contacts the 23S rRNA (bridge B1a) and protein L5 of the 50S subunit (bridge B1b), connecting the 2 subunits; these bridges are implicated in subunit movement. Contacts the tRNAs in the A and P-sites. This chain is Small ribosomal subunit protein uS13, found in Sorangium cellulosum (strain So ce56) (Polyangium cellulosum (strain So ce56)).